A 228-amino-acid polypeptide reads, in one-letter code: Death domain-containing membrane protein NRADD (228 aa).

The Extracellular portion of the chain corresponds to 1 to 52 (MLHNVSKGVVYSDTALKGQDGDREGMWVGAGGALAPNTSSLFPPEPPGASSN). Asn-4 and Asn-37 each carry an N-linked (GlcNAc...) asparagine glycan. A helical; Signal-anchor for type III membrane protein membrane pass occupies residues 53-73 (IIPVYCALLATVVLGLLAYVA). Residues 74 to 228 (FKCWRSRKQR…SSPAEGCSVV (155 aa)) lie on the Cytoplasmic side of the membrane. One can recognise a Death domain in the interval 143-222 (EEVQRLLILG…DVVQVLSSPA (80 aa)).

In terms of assembly, interacts with NTRK1. Isoform 1 and isoform 2 interact with NGFR. Interacts with SORT1. Post-translationally, isoform 1 is N-glycosylated. Isoform 2 is not N-glycosylated. As to expression, detected in embryo, including embryonic brain. Detected at very low levels in adult testis, spleen, thymus and lung.

The protein resides in the cell membrane. Its subcellular location is the nucleus. Its function is as follows. Modulates NTRK1 signaling. Can activate several intracellular signaling pathways, leading to activation of JUN. Promotes translocation of SORT1 to the cell membrane, and thereby hinders lysosomal degradation of SOTR1 and promotes its interaction with NGFR. Both isoform 1 and isoform 2 promote apoptosis. The sequence is that of Death domain-containing membrane protein NRADD (Nradd) from Rattus norvegicus (Rat).